Consider the following 233-residue polypeptide: Phosphoribosylaminoimidazole-succinocarboxamide synthase (233 aa).

Belongs to the SAICAR synthetase family.

The enzyme catalyses 5-amino-1-(5-phospho-D-ribosyl)imidazole-4-carboxylate + L-aspartate + ATP = (2S)-2-[5-amino-1-(5-phospho-beta-D-ribosyl)imidazole-4-carboxamido]succinate + ADP + phosphate + 2 H(+). It functions in the pathway purine metabolism; IMP biosynthesis via de novo pathway; 5-amino-1-(5-phospho-D-ribosyl)imidazole-4-carboxamide from 5-amino-1-(5-phospho-D-ribosyl)imidazole-4-carboxylate: step 1/2. This is Phosphoribosylaminoimidazole-succinocarboxamide synthase from Thermococcus sibiricus (strain DSM 12597 / MM 739).